The primary structure comprises 395 residues: Type II restriction enzyme BsuFI (395 aa).

Homodimer. The cofactor is Mg(2+).

It carries out the reaction Endonucleolytic cleavage of DNA to give specific double-stranded fragments with terminal 5'-phosphates.. A P subtype restriction enzyme that recognizes the double-stranded sequence 5'-CCGG-3' and cleaves after C-1. The sequence is that of Type II restriction enzyme BsuFI (hsdFR) from Bacillus subtilis.